A 603-amino-acid chain; its full sequence is Elongation factor 4 (603 aa).

The tr-type G domain occupies Ser-7 to Ser-189. Residues Asp-19 to Thr-24 and Asn-136 to Asp-139 each bind GTP.

This sequence belongs to the TRAFAC class translation factor GTPase superfamily. Classic translation factor GTPase family. LepA subfamily.

The protein localises to the cell inner membrane. It catalyses the reaction GTP + H2O = GDP + phosphate + H(+). Its function is as follows. Required for accurate and efficient protein synthesis under certain stress conditions. May act as a fidelity factor of the translation reaction, by catalyzing a one-codon backward translocation of tRNAs on improperly translocated ribosomes. Back-translocation proceeds from a post-translocation (POST) complex to a pre-translocation (PRE) complex, thus giving elongation factor G a second chance to translocate the tRNAs correctly. Binds to ribosomes in a GTP-dependent manner. This is Elongation factor 4 from Crocosphaera subtropica (strain ATCC 51142 / BH68) (Cyanothece sp. (strain ATCC 51142)).